Here is a 118-residue protein sequence, read N- to C-terminus: Large ribosomal subunit protein bL19 (118 aa).

Belongs to the bacterial ribosomal protein bL19 family.

Functionally, this protein is located at the 30S-50S ribosomal subunit interface and may play a role in the structure and function of the aminoacyl-tRNA binding site. The polypeptide is Large ribosomal subunit protein bL19 (Helicobacter pylori (strain P12)).